The sequence spans 142 residues: Large ribosomal subunit protein uL11 (142 aa).

Belongs to the universal ribosomal protein uL11 family. In terms of assembly, part of the ribosomal stalk of the 50S ribosomal subunit. Interacts with L10 and the large rRNA to form the base of the stalk. L10 forms an elongated spine to which L12 dimers bind in a sequential fashion forming a multimeric L10(L12)X complex. In terms of processing, one or more lysine residues are methylated.

In terms of biological role, forms part of the ribosomal stalk which helps the ribosome interact with GTP-bound translation factors. This chain is Large ribosomal subunit protein uL11, found in Vibrio cholerae serotype O1 (strain ATCC 39541 / Classical Ogawa 395 / O395).